The sequence spans 371 residues: Carlactonoate CLA methyltransferase (371 aa).

Y21 provides a ligand contact to S-adenosyl-L-homocysteine. Q28 contacts (11R)-carlactonoate. S-adenosyl-L-homocysteine is bound by residues C62, N67, D101, L102, S141, and F142. Residues H162 and W163 each contribute to the (11R)-carlactonoate site. Residues N180, D266, Y268, and D269 each contribute to the Mg(2+) site.

It belongs to the methyltransferase superfamily. Type-7 methyltransferase family. SABATH subfamily. As to quaternary structure, homodimer. It depends on Mg(2+) as a cofactor.

It carries out the reaction (11R)-carlactonoate + S-adenosyl-L-methionine = (11R)-methyl carlactonoate + S-adenosyl-L-homocysteine. Its function is as follows. Methyltransferase involved in the biosynthesis of strigolactone natural products, bioactive compounds promoting plant fitness and soil microbe interactions, but preventing shoot branching. Catalyzes the biosynthesis of (11R)-methyl carlactonoate (MeCLA) from (11R)-carlactonoate (CLA), downstream of MAX1; MeCLA is probably biologically active as a hormone regulating shoot branching and serves as a precursor of non-canonical strigolactones (SLs). This chain is Carlactonoate CLA methyltransferase, found in Arabidopsis thaliana (Mouse-ear cress).